The chain runs to 152 residues: SKP1-like protein 12 (152 aa).

Residues 94-152 (ILAANYLNIKSLFDLTCQTVADMIKGKTPEEIRSTFNIENDFTPEEEEAVRKENQWAFE) form an interaction with the F-box domain of F-box proteins region.

The protein belongs to the SKP1 family. As to quaternary structure, part of a SCF (SKP1-cullin-F-box) protein ligase complex. Interacts with ADO3/FKF1, COI1/FBL2, EBF1/FBL6, PP2B10, At3g61590 and At5g49610. Expressed in young seedlings, roots, leaves, floral stems, inflorescences, and siliques, with a slightly higher level in inflorescence than in other tissues.

It localises to the nucleus. It participates in protein modification; protein ubiquitination. Its function is as follows. Involved in ubiquitination and subsequent proteasomal degradation of target proteins. Together with CUL1, RBX1 and a F-box protein, it forms a SCF E3 ubiquitin ligase complex. The functional specificity of this complex depends on the type of F-box protein. In the SCF complex, it serves as an adapter that links the F-box protein to CUL1. Plays a role during early flowers reproductive development. This chain is SKP1-like protein 12 (ASK12), found in Arabidopsis thaliana (Mouse-ear cress).